The following is a 249-amino-acid chain: MTHQPQQSPQFFLTAPSPCPYLEGQQERKVFTHLVGDKANEINDLLTQGGFRRSQNIAYRPACEVCRACISVRILAGEFEMTRNMRRVWSQNRDLIGRVHKAQPSTEQYALFRDYLDARHRSGGMSDMTVLDYAMMIEDTHVNTQIIEYRRRGPDSFMSAKGDGELIAVALTDVMADGLSMVYSFFSPHMQERSLGTYMILDHIERARAAGLPHVYLGYWVEGSRKMQYKIRFTPQEHLGPRGWQRFEG.

The protein belongs to the R-transferase family. Bpt subfamily.

Its subcellular location is the cytoplasm. The catalysed reaction is N-terminal L-glutamyl-[protein] + L-leucyl-tRNA(Leu) = N-terminal L-leucyl-L-glutamyl-[protein] + tRNA(Leu) + H(+). The enzyme catalyses N-terminal L-aspartyl-[protein] + L-leucyl-tRNA(Leu) = N-terminal L-leucyl-L-aspartyl-[protein] + tRNA(Leu) + H(+). In terms of biological role, functions in the N-end rule pathway of protein degradation where it conjugates Leu from its aminoacyl-tRNA to the N-termini of proteins containing an N-terminal aspartate or glutamate. The sequence is that of Aspartate/glutamate leucyltransferase from Brucella canis (strain ATCC 23365 / NCTC 10854 / RM-666).